Here is an 84-residue protein sequence, read N- to C-terminus: Exodeoxyribonuclease 7 small subunit (84 aa).

Belongs to the XseB family. As to quaternary structure, heterooligomer composed of large and small subunits.

The protein resides in the cytoplasm. The catalysed reaction is Exonucleolytic cleavage in either 5'- to 3'- or 3'- to 5'-direction to yield nucleoside 5'-phosphates.. Its function is as follows. Bidirectionally degrades single-stranded DNA into large acid-insoluble oligonucleotides, which are then degraded further into small acid-soluble oligonucleotides. This chain is Exodeoxyribonuclease 7 small subunit, found in Haemophilus influenzae (strain 86-028NP).